A 243-amino-acid chain; its full sequence is Pyridoxine 5'-phosphate synthase (243 aa).

Asparagine 9 contributes to the 3-amino-2-oxopropyl phosphate binding site. 11–12 serves as a coordination point for 1-deoxy-D-xylulose 5-phosphate; the sequence is DH. A 3-amino-2-oxopropyl phosphate-binding site is contributed by arginine 20. Histidine 45 acts as the Proton acceptor in catalysis. Positions 47 and 52 each coordinate 1-deoxy-D-xylulose 5-phosphate. Glutamate 72 (proton acceptor) is an active-site residue. Threonine 102 is a binding site for 1-deoxy-D-xylulose 5-phosphate. The active-site Proton donor is the histidine 193. 3-amino-2-oxopropyl phosphate is bound by residues glycine 194 and 215 to 216; that span reads GH.

Belongs to the PNP synthase family. In terms of assembly, homooctamer; tetramer of dimers.

The protein resides in the cytoplasm. It catalyses the reaction 3-amino-2-oxopropyl phosphate + 1-deoxy-D-xylulose 5-phosphate = pyridoxine 5'-phosphate + phosphate + 2 H2O + H(+). It participates in cofactor biosynthesis; pyridoxine 5'-phosphate biosynthesis; pyridoxine 5'-phosphate from D-erythrose 4-phosphate: step 5/5. Functionally, catalyzes the complicated ring closure reaction between the two acyclic compounds 1-deoxy-D-xylulose-5-phosphate (DXP) and 3-amino-2-oxopropyl phosphate (1-amino-acetone-3-phosphate or AAP) to form pyridoxine 5'-phosphate (PNP) and inorganic phosphate. The protein is Pyridoxine 5'-phosphate synthase of Vibrio cholerae serotype O1 (strain ATCC 39315 / El Tor Inaba N16961).